A 393-amino-acid polypeptide reads, in one-letter code: MWWRVLSLLAWFPLQEASLTNHTETITVEEGQTLTLKCVTSLRKNSSLQWLTPSGFTIFLNEYPALKNSKYQLLHHSANQLSITVPNVTLQDEGVYKCLHYSDSVSTKEVKVIVLATPFKPILEASVIRKQNGEEHVVLMCSTMRSKPPPQITWLLGNSMEVSGGTLHEFETDGKKCNTTSTLIIHTYGKNSTVDCIIRHRGLQGRKLVAPFRFEDLVTDEETASDALERNSLSSQDPQQPTSTVSVTEDSSTSEIDKEEKEQTTQDPDLTTEANPQYLGLARKKSGILLLTLVSFLIFILFIIVQLFIMKLRKAHVIWKKENEVSEHTLESYRSRSNNEETSSEEKNGQSSHPMRCMNYITKLYSEAKTKRKENVQHSKLEEKHIQVPESIV.

The first 17 residues, 1–17 (MWWRVLSLLAWFPLQEA), serve as a signal peptide directing secretion. Residues 18 to 114 (SLTNHTETIT…VSTKEVKVIV (97 aa)) form the Ig-like V-type domain. The Extracellular portion of the chain corresponds to 18-287 (SLTNHTETIT…YLGLARKKSG (270 aa)). N-linked (GlcNAc...) asparagine glycosylation is found at Asn-21, Asn-87, and Asn-178. 2 disulfide bridges follow: Cys-38-Cys-98 and Cys-141-Cys-196. In terms of domain architecture, Ig-like C2-type spans 118–210 (PFKPILEASV…RGLQGRKLVA (93 aa)). Residues 225–273 (SDALERNSLSSQDPQQPTSTVSVTEDSSTSEIDKEEKEQTTQDPDLTTE) are disordered. Over residues 231 to 241 (NSLSSQDPQQP) the composition is skewed to polar residues. Positions 242-254 (TSTVSVTEDSSTS) are enriched in low complexity. The span at 255-264 (EIDKEEKEQT) shows a compositional bias: basic and acidic residues. The chain crosses the membrane as a helical span at residues 288–308 (ILLLTLVSFLIFILFIIVQLF). Residues 309–393 (IMKLRKAHVI…KHIQVPESIV (85 aa)) lie on the Cytoplasmic side of the membrane. Basic and acidic residues-rich tracts occupy residues 328–348 (HTLE…EEKN) and 374–387 (ENVQ…KHIQ). 2 disordered regions span residues 328–354 (HTLE…SSHP) and 374–393 (ENVQ…ESIV). A PDZ-binding motif is present at residues 390 to 393 (ESIV).

It belongs to the nectin family. In terms of assembly, monomer. May form homodimer (via Ig-like V-type domain). Interacts (via Ig-like V-type domain) with CADM1 (via Ig-like V-type domain); the interaction competes with CRTAM homodimerization and CADM1 homodimerization. Interacts (via PDZ-binding motif) with SCRIB (via PDZ domain 3); the interaction promotes CRTAM and SCRIB polarization in a subset of CD4+ T-cells. In terms of tissue distribution, in the immune system, expression is restricted to activated class-I MHC-restricted cells, including NKT and CD8 T-cells. Strongly expressed in spleen, thymus, small intestine, peripheral blood leukocyte, and in Purkinje neurons in cerebellum. Expressed at much lower levels in testis, ovary, colon, lung and lymphoid tissues.

The protein resides in the cell membrane. Functionally, mediates heterophilic cell-cell adhesion which regulates the activation, differentiation and tissue retention of various T-cell subsets. Interaction with CADM1 promotes natural killer (NK) cell cytotoxicity and IFNG/interferon-gamma secretion by CD8+ T-cells in vitro as well as NK cell-mediated rejection of tumors expressing CADM1 in vivo. Regulates CD8+ T-cell proliferation in response to T-cell receptor (TCR) activation. Appears to be dispensable for CD8+ T-cell-mediated cytotoxicity. Interaction with SCRIB promotes the late phase of cellular polarization of a subset of CD4+ T-cells, which in turn regulates TCR-mediated proliferation and IFNG, IL17 and IL22 production. By interacting with CADM1 on CD8+ dendritic cells, regulates the retention of activated CD8+ T-cells within the draining lymph node. Required for the intestinal retention of intraepithelial CD4+ CD8+ T-cells and, to a lesser extent, intraepithelial and lamina propria CD8+ T-cells and CD4+ T-cells. Interaction with CADM1 promotes the adhesion to gut-associated CD103+ dendritic cells, which may facilitate the expression of gut-homing and adhesion molecules on T-cells and the conversion of CD4+ T-cells into CD4+ CD8+ T-cells. In Homo sapiens (Human), this protein is Cytotoxic and regulatory T-cell molecule.